A 708-amino-acid polypeptide reads, in one-letter code: Glycine--tRNA ligase beta subunit (708 aa).

Belongs to the class-II aminoacyl-tRNA synthetase family. In terms of assembly, tetramer of two alpha and two beta subunits.

It is found in the cytoplasm. The catalysed reaction is tRNA(Gly) + glycine + ATP = glycyl-tRNA(Gly) + AMP + diphosphate. The sequence is that of Glycine--tRNA ligase beta subunit from Methylobacillus flagellatus (strain ATCC 51484 / DSM 6875 / VKM B-1610 / KT).